The primary structure comprises 384 residues: Putative glutamate--cysteine ligase 2-2 (384 aa).

This sequence belongs to the glutamate--cysteine ligase type 2 family. YbdK subfamily.

It carries out the reaction L-cysteine + L-glutamate + ATP = gamma-L-glutamyl-L-cysteine + ADP + phosphate + H(+). Functionally, ATP-dependent carboxylate-amine ligase which exhibits weak glutamate--cysteine ligase activity. This Rubrobacter xylanophilus (strain DSM 9941 / JCM 11954 / NBRC 16129 / PRD-1) protein is Putative glutamate--cysteine ligase 2-2.